The following is an 850-amino-acid chain: G-type lectin S-receptor-like serine/threonine-protein kinase CES101 (850 aa).

The first 22 residues, 1-22 (MWSNCIFLTLFTFYLFLGQSCC), serve as a signal peptide directing secretion. The Extracellular segment spans residues 23 to 423 (QTDTLLQGQY…IKGSKLAATW (401 aa)). One can recognise a Bulb-type lectin domain in the interval 24 to 144 (TDTLLQGQYL…DSDGSMKRTL (121 aa)). N-linked (GlcNAc...) asparagine glycosylation is found at Asn55, Asn118, Asn194, and Asn374. The PAN domain maps to 334-416 (CSRFGYTFRE…PRTIYIRIKG (83 aa)). Intrachain disulfides connect Cys367–Cys390 and Cys371–Cys377. Residues 424-444 (LVVVASLFLIIPVTWLIIYLV) traverse the membrane as a helical segment. The Cytoplasmic segment spans residues 445–850 (LRKFKIKGTN…RVTITVMEAR (406 aa)). The Protein kinase domain maps to 527–816 (FSDANKLGEG…ALSLPKEPAF (290 aa)). Residues 533 to 541 (LGEGGFGPV) and Lys555 each bind ATP. Ser561 carries the phosphoserine modification. The segment at 616–633 (LRKIVLDWKLRFRIMEGI) is caM-binding. The Proton acceptor role is filled by Asp652. At Ser669 the chain carries Phosphoserine. Thr686 bears the Phosphothreonine mark. Phosphoserine occurs at positions 730 and 838. Thr845 carries the phosphothreonine modification.

The protein belongs to the protein kinase superfamily. Ser/Thr protein kinase family. As to expression, mostly expressed in leaves, and, to a lower extent, in roots and flowers.

Its subcellular location is the cell membrane. It catalyses the reaction L-seryl-[protein] + ATP = O-phospho-L-seryl-[protein] + ADP + H(+). The catalysed reaction is L-threonyl-[protein] + ATP = O-phospho-L-threonyl-[protein] + ADP + H(+). Functionally, promotes the expression of genes involved in photosynthesis at least in dedifferentiated calli. In Arabidopsis thaliana (Mouse-ear cress), this protein is G-type lectin S-receptor-like serine/threonine-protein kinase CES101 (CES101).